The chain runs to 488 residues: Bifunctional protein GlmU (488 aa).

The interval 1-237 (MPRTRTPLAA…AEEASGVNDR (237 aa)) is pyrophosphorylase. Residues 13–16 (LAAG), K27, Q82, 87–88 (GT), 110–112 (SGD), G149, E164, N179, and N235 each bind UDP-N-acetyl-alpha-D-glucosamine. D112 serves as a coordination point for Mg(2+). Position 235 (N235) interacts with Mg(2+). The segment at 238-258 (VELSRANRVMVGRLAEAFMRA) is linker. An N-acetyltransferase region spans residues 259–488 (GVTIEDPARF…KGRPAARRAS (230 aa)). Residues R341 and K359 each coordinate UDP-N-acetyl-alpha-D-glucosamine. Catalysis depends on H371, which acts as the Proton acceptor. Residues Y374 and N385 each coordinate UDP-N-acetyl-alpha-D-glucosamine. Acetyl-CoA contacts are provided by residues A388, 394 to 395 (NY), S413, A431, and R448. A disordered region spans residues 459-488 (AQRQAEKQMKGTATGPASARKGRPAARRAS). The span at 478–488 (RKGRPAARRAS) shows a compositional bias: basic residues.

The protein in the N-terminal section; belongs to the N-acetylglucosamine-1-phosphate uridyltransferase family. It in the C-terminal section; belongs to the transferase hexapeptide repeat family. As to quaternary structure, homotrimer. Mg(2+) is required as a cofactor.

The protein localises to the cytoplasm. The catalysed reaction is alpha-D-glucosamine 1-phosphate + acetyl-CoA = N-acetyl-alpha-D-glucosamine 1-phosphate + CoA + H(+). It catalyses the reaction N-acetyl-alpha-D-glucosamine 1-phosphate + UTP + H(+) = UDP-N-acetyl-alpha-D-glucosamine + diphosphate. It functions in the pathway nucleotide-sugar biosynthesis; UDP-N-acetyl-alpha-D-glucosamine biosynthesis; N-acetyl-alpha-D-glucosamine 1-phosphate from alpha-D-glucosamine 6-phosphate (route II): step 2/2. It participates in nucleotide-sugar biosynthesis; UDP-N-acetyl-alpha-D-glucosamine biosynthesis; UDP-N-acetyl-alpha-D-glucosamine from N-acetyl-alpha-D-glucosamine 1-phosphate: step 1/1. The protein operates within bacterial outer membrane biogenesis; LPS lipid A biosynthesis. In terms of biological role, catalyzes the last two sequential reactions in the de novo biosynthetic pathway for UDP-N-acetylglucosamine (UDP-GlcNAc). The C-terminal domain catalyzes the transfer of acetyl group from acetyl coenzyme A to glucosamine-1-phosphate (GlcN-1-P) to produce N-acetylglucosamine-1-phosphate (GlcNAc-1-P), which is converted into UDP-GlcNAc by the transfer of uridine 5-monophosphate (from uridine 5-triphosphate), a reaction catalyzed by the N-terminal domain. The protein is Bifunctional protein GlmU of Anaeromyxobacter dehalogenans (strain 2CP-1 / ATCC BAA-258).